Reading from the N-terminus, the 357-residue chain is Protein RecA (357 aa).

69 to 76 lines the ATP pocket; it reads GPESSGKT. Residues 337–357 are disordered; the sequence is SANSVAKNNEDDEDEDVEEEE. Over residues 346–357 the composition is skewed to acidic residues; sequence EDDEDEDVEEEE.

This sequence belongs to the RecA family.

The protein resides in the cytoplasm. Functionally, can catalyze the hydrolysis of ATP in the presence of single-stranded DNA, the ATP-dependent uptake of single-stranded DNA by duplex DNA, and the ATP-dependent hybridization of homologous single-stranded DNAs. It interacts with LexA causing its activation and leading to its autocatalytic cleavage. This Nostoc sp. (strain PCC 7120 / SAG 25.82 / UTEX 2576) protein is Protein RecA.